The primary structure comprises 132 residues: Histone H2B.2 (132 aa).

A compositionally biased stretch (basic and acidic residues) spans 1-19; it reads MAPKAEKKPASKAPAEKKP. The interval 1-39 is disordered; that stretch reads MAPKAEKKPASKAPAEKKPAAKKTSSSVDPSKKRTKARK. N6-acetyllysine; alternate is present on residues K7 and K8. Glycyl lysine isopeptide (Lys-Gly) (interchain with G-Cter in SUMO); alternate cross-links involve residues K7 and K8. A Phosphoserine modification is found at S11. An N6-acetyllysine modification is found at K12. K17 is modified (N6-acetyllysine; alternate). K17 is covalently cross-linked (Glycyl lysine isopeptide (Lys-Gly) (interchain with G-Cter in SUMO); alternate). K18 participates in a covalent cross-link: Glycyl lysine isopeptide (Lys-Gly) (interchain with G-Cter in SUMO). K125 participates in a covalent cross-link: Glycyl lysine isopeptide (Lys-Gly) (interchain with G-Cter in ubiquitin).

The protein belongs to the histone H2B family. As to quaternary structure, the nucleosome is a histone octamer containing two molecules each of H2A, H2B, H3 and H4 assembled in one H3-H4 heterotetramer and two H2A-H2B heterodimers. The octamer wraps approximately 147 bp of DNA. Monoubiquitinated by the UBC2-BRE1 complex to form H2BK123ub1. H2BK123ub1 gives a specific tag for epigenetic transcriptional activation and is also prerequisite for H3K4me and H3K79me formation. H2BK123ub1 also modulates the formation of double-strand breaks during meiosis and is a prerequisite for DNA-damage checkpoint activation. Post-translationally, phosphorylated by STE20 to form H2BS10ph during progression through meiotic prophase. May be correlated with chromosome condensation. In terms of processing, acetylated by GCN5 to form H2BK11ac and H2BK16ac. H2BK16ac can also be formed by ESA1. Acetylation of N-terminal lysines and particularly formation of H2BK11acK16ac has a positive effect on transcription. Sumoylation to form H2BK6su or H2BK7su, and probably also H2BK16su or H2BK17su, occurs preferentially near the telomeres and represses gene transcription.

The protein localises to the nucleus. Its subcellular location is the chromosome. In terms of biological role, core component of nucleosome. Nucleosomes wrap and compact DNA into chromatin, limiting DNA accessibility to the cellular machineries which require DNA as a template. Histones thereby play a central role in transcription regulation, DNA repair, DNA replication and chromosomal stability. DNA accessibility is regulated via a complex set of post-translational modifications of histones, also called histone code, and nucleosome remodeling. This chain is Histone H2B.2 (HTB1), found in Kluyveromyces lactis (strain ATCC 8585 / CBS 2359 / DSM 70799 / NBRC 1267 / NRRL Y-1140 / WM37) (Yeast).